We begin with the raw amino-acid sequence, 317 residues long: MHNYLDFEKPISDLEGKIIELKKLATEDESIDTTDEIGRLEVRVREAILEIYSKLNAWQKTQVARHPQRPHFVDYAKTLFQEFTPLAGDRKFSEDAAIQAGLARFRGQPVAVIGQEKGNDTKSRLKHNFGSPRPEGYRKAIRILEMADRFGLPVISLVDTAGAYPGVGAEERGQAEAIARSTEMCLGVKVPLVSVVIGEGGSGGAIAIATGNRVYMLEHSIYSVISPEGAASILWRDSTRAREAATNMKITAEDLKSLGVIDGIISEPLGGAHRDPDSVIAATGDVIANALAEMSSRSGEQLRNERRQKFLNMGRNL.

Residues L40–E293 enclose the CoA carboxyltransferase C-terminal domain.

The protein belongs to the AccA family. In terms of assembly, acetyl-CoA carboxylase is a heterohexamer composed of biotin carboxyl carrier protein (AccB), biotin carboxylase (AccC) and two subunits each of ACCase subunit alpha (AccA) and ACCase subunit beta (AccD).

The protein resides in the cytoplasm. It carries out the reaction N(6)-carboxybiotinyl-L-lysyl-[protein] + acetyl-CoA = N(6)-biotinyl-L-lysyl-[protein] + malonyl-CoA. It functions in the pathway lipid metabolism; malonyl-CoA biosynthesis; malonyl-CoA from acetyl-CoA: step 1/1. Its function is as follows. Component of the acetyl coenzyme A carboxylase (ACC) complex. First, biotin carboxylase catalyzes the carboxylation of biotin on its carrier protein (BCCP) and then the CO(2) group is transferred by the carboxyltransferase to acetyl-CoA to form malonyl-CoA. The chain is Acetyl-coenzyme A carboxylase carboxyl transferase subunit alpha from Rhizobium etli (strain CIAT 652).